The chain runs to 493 residues: Cytochrome P450 2E1 (493 aa).

298–303 serves as a coordination point for substrate; sequence FAGTET. C437 is a binding site for heme.

Belongs to the cytochrome P450 family. As to quaternary structure, interacts with chaperones HSP70 and HSP90; this interaction is required for initial targeting to mitochondria. It depends on heme as a cofactor.

It localises to the endoplasmic reticulum membrane. It is found in the microsome membrane. The protein resides in the mitochondrion inner membrane. The catalysed reaction is an organic molecule + reduced [NADPH--hemoprotein reductase] + O2 = an alcohol + oxidized [NADPH--hemoprotein reductase] + H2O + H(+). It carries out the reaction (5Z,8Z,11Z)-eicosatrienoate + reduced [NADPH--hemoprotein reductase] + O2 = 19-hydroxy-(5Z,8Z,11Z)-eicosatrienoate + oxidized [NADPH--hemoprotein reductase] + H2O + H(+). The enzyme catalyses (5Z,8Z,11Z,14Z,17Z)-eicosapentaenoate + reduced [NADPH--hemoprotein reductase] + O2 = 19-hydroxy-(5Z,8Z,11Z,14Z,17Z)-eicosapentaenoate + oxidized [NADPH--hemoprotein reductase] + H2O + H(+). It catalyses the reaction (4Z,7Z,10Z,13Z,16Z,19Z)-docosahexaenoate + reduced [NADPH--hemoprotein reductase] + O2 = 21-hydroxy-(4Z,7Z,10Z,13Z,16Z,19Z)-docosahexaenoate + oxidized [NADPH--hemoprotein reductase] + H2O + H(+). The catalysed reaction is dodecanoate + reduced [NADPH--hemoprotein reductase] + O2 = 11-hydroxydodecanoate + oxidized [NADPH--hemoprotein reductase] + H2O + H(+). It carries out the reaction tetradecanoate + reduced [NADPH--hemoprotein reductase] + O2 = 13-hydroxytetradecanoate + oxidized [NADPH--hemoprotein reductase] + H2O + H(+). The enzyme catalyses 4-nitrophenol + NADPH + O2 + H(+) = 4-nitrocatechol + NADP(+) + H2O. It participates in lipid metabolism; fatty acid metabolism. Its activity is regulated as follows. The omega-1 hydroxylase activity is stimulated by cytochrome b5. Its function is as follows. A cytochrome P450 monooxygenase involved in the metabolism of fatty acids. Mechanistically, uses molecular oxygen inserting one oxygen atom into a substrate, and reducing the second into a water molecule, with two electrons provided by NADPH via cytochrome P450 reductase (NADPH--hemoprotein reductase). Catalyzes the hydroxylation of carbon-hydrogen bonds. Hydroxylates fatty acids specifically at the omega-1 position displaying the highest catalytic activity for saturated fatty acids. May be involved in the oxidative metabolism of xenobiotics. This is Cytochrome P450 2E1 (CYP2E1) from Mesocricetus auratus (Golden hamster).